Reading from the N-terminus, the 669-residue chain is Cysteine-rich receptor-like protein kinase 34 (669 aa).

Residues 1-23 (MKLKISFLPTFLIFLISLDSVTA) form the signal peptide. 2 Gnk2-homologous domains span residues 24–123 (QEIC…NVSF) and 133–246 (ETLY…LYPY). At 24 to 285 (QEICFSGFFK…SDRANTTIKG (262 aa)) the chain is on the extracellular side. Residues asparagine 35, asparagine 52, asparagine 103, asparagine 120, asparagine 147, asparagine 172, asparagine 252, and asparagine 280 are each glycosylated (N-linked (GlcNAc...) asparagine). Residues 286-306 (IIVAIVVPIIVILVSLVVLLV) traverse the membrane as a helical segment. The Cytoplasmic segment spans residues 307 to 669 (VCRRKKSYKT…DASITEFYPR (363 aa)). Positions 345 to 624 (FSDSNMIGRG…MMLTSSTTTL (280 aa)) constitute a Protein kinase domain. ATP is bound by residues 351 to 359 (IGRGGFGEV) and lysine 373. Tyrosine 418 is subject to Phosphotyrosine. Aspartate 470 serves as the catalytic Proton acceptor. Serine 474 is subject to Phosphoserine. Threonine 510 bears the Phosphothreonine mark. Tyrosine 518 carries the post-translational modification Phosphotyrosine.

This sequence belongs to the protein kinase superfamily. Ser/Thr protein kinase family. CRK subfamily.

It is found in the membrane. It carries out the reaction L-seryl-[protein] + ATP = O-phospho-L-seryl-[protein] + ADP + H(+). The enzyme catalyses L-threonyl-[protein] + ATP = O-phospho-L-threonyl-[protein] + ADP + H(+). This Arabidopsis thaliana (Mouse-ear cress) protein is Cysteine-rich receptor-like protein kinase 34.